A 48-amino-acid chain; its full sequence is Large ribosomal subunit protein bL33A (48 aa).

It belongs to the bacterial ribosomal protein bL33 family.

The chain is Large ribosomal subunit protein bL33A from Streptococcus agalactiae serotype V (strain ATCC BAA-611 / 2603 V/R).